Reading from the N-terminus, the 302-residue chain is Thioredoxin-like protein CDSP32, chloroplastic (302 aa).

Residues 1–56 constitute a chloroplast transit peptide; sequence MATVANFLAKPISTVVPRPSSAVASTSSFVFFNHKTNPLFRRKNLPKRLFSAVKIK. The region spanning 163-298 is the Thioredoxin domain; the sequence is HEEEGIEPDQ…IGEILRYSGV (136 aa). Residues C219 and C222 each act as nucleophile in the active site. Residues C219 and C222 are joined by a disulfide bond.

This sequence belongs to the thioredoxin family. In terms of assembly, interacts with the plastidial peroxiredoxin BAS1.

The protein resides in the plastid. It is found in the chloroplast stroma. Its function is as follows. Probable thiol-disulfide oxidoreductase involved in resistance to oxidative stress. May participate in the reduction of alkyl hydroperoxides derived from oxidative stress by acting as a physiological electron donor to the BAS1 peroxiredoxin. May regenerate methionine sulfoxide reductase B1 (MSRB1) activity through sulfenic acid reduction. This Arabidopsis thaliana (Mouse-ear cress) protein is Thioredoxin-like protein CDSP32, chloroplastic (CDSP32).